Consider the following 173-residue polypeptide: Histone deacetylase complex subunit SAP30 homolog (173 aa).

Residues 21–69 form an Atypical zinc finger; that stretch reads CCLLDDGDRCRNQAGNASYSKRIQKTVTQRRLKLSIDTAARHIYICDFH.

Belongs to the SAP30 family. As to quaternary structure, component of the class 1 Sin3-histone deacetylase complex (HDAC).

Its subcellular location is the nucleus. In terms of biological role, required for the function of the class 1 Sin3-histone deacetylase complex (HDAC). The polypeptide is Histone deacetylase complex subunit SAP30 homolog (Aedes aegypti (Yellowfever mosquito)).